The primary structure comprises 128 residues: MRHRLSGRQLNRNASHRQAMFRNMASSLVRHEIIKTTLPKAKELRRVVEPLITLAKSDSVANRRLAFARTRDRDVVGKLFTELGPRFQGRPGGYTRILKCGFRAGDNAPMAYIELVGRPVDAEAVTEE.

It belongs to the bacterial ribosomal protein bL17 family. As to quaternary structure, part of the 50S ribosomal subunit. Contacts protein L32.

This chain is Large ribosomal subunit protein bL17, found in Tolumonas auensis (strain DSM 9187 / NBRC 110442 / TA 4).